The following is a 222-amino-acid chain: uncharacterized protein (222 aa).

An HTH gntR-type domain is found at 8–77 (AKKNQIIYRY…NTPGYFVCKD (70 aa)).

This is an uncharacterized protein from Mycoplasma genitalium (strain ATCC 33530 / DSM 19775 / NCTC 10195 / G37) (Mycoplasmoides genitalium).